Here is a 364-residue protein sequence, read N- to C-terminus: Chorismate synthase (364 aa).

Arg-48 and Arg-54 together coordinate NADP(+). FMN is bound by residues 125–127 (RSS), Gly-282, 297–301 (KPPAS), and Arg-323.

The protein belongs to the chorismate synthase family. As to quaternary structure, homotetramer. Requires FMNH2 as cofactor.

It catalyses the reaction 5-O-(1-carboxyvinyl)-3-phosphoshikimate = chorismate + phosphate. Its pathway is metabolic intermediate biosynthesis; chorismate biosynthesis; chorismate from D-erythrose 4-phosphate and phosphoenolpyruvate: step 7/7. Catalyzes the anti-1,4-elimination of the C-3 phosphate and the C-6 proR hydrogen from 5-enolpyruvylshikimate-3-phosphate (EPSP) to yield chorismate, which is the branch point compound that serves as the starting substrate for the three terminal pathways of aromatic amino acid biosynthesis. This reaction introduces a second double bond into the aromatic ring system. This Chloroflexus aurantiacus (strain ATCC 29366 / DSM 635 / J-10-fl) protein is Chorismate synthase.